The primary structure comprises 455 residues: UDP-N-acetylmuramoylalanine--D-glutamate ligase (455 aa).

ATP is bound at residue 119–125; that stretch reads GTNGKTT.

It belongs to the MurCDEF family.

It is found in the cytoplasm. The enzyme catalyses UDP-N-acetyl-alpha-D-muramoyl-L-alanine + D-glutamate + ATP = UDP-N-acetyl-alpha-D-muramoyl-L-alanyl-D-glutamate + ADP + phosphate + H(+). It participates in cell wall biogenesis; peptidoglycan biosynthesis. Its function is as follows. Cell wall formation. Catalyzes the addition of glutamate to the nucleotide precursor UDP-N-acetylmuramoyl-L-alanine (UMA). The sequence is that of UDP-N-acetylmuramoylalanine--D-glutamate ligase from Listeria monocytogenes serovar 1/2a (strain ATCC BAA-679 / EGD-e).